The chain runs to 407 residues: Transmembrane protein 184B (407 aa).

Positions 1–24 (MTVRGAALAPDPASPTTAAASPSI) are disordered. Helical transmembrane passes span 40-60 (FLMT…ALLI), 84-104 (ILFI…FFTN), 121-141 (LVIY…SSIM), 178-198 (LQFC…QAFG), 214-234 (VTII…LFYF), 249-269 (FFMV…LAIL), and 290-310 (VAAG…ALAL). A disordered region spans residues 369-395 (TLEPGPTWRGGAHGLSRSHSLSGARDN). Residues serine 388, serine 402, and serine 403 each carry the phosphoserine modification.

It belongs to the TMEM184 family.

Its subcellular location is the membrane. Functionally, may activate the MAP kinase signaling pathway. In Bos taurus (Bovine), this protein is Transmembrane protein 184B (TMEM184B).